Reading from the N-terminus, the 319-residue chain is Probable deoxyhypusine synthase (319 aa).

Lysine 287 serves as the catalytic Nucleophile.

The protein belongs to the deoxyhypusine synthase family. NAD(+) is required as a cofactor.

It carries out the reaction [eIF5A protein]-L-lysine + spermidine = [eIF5A protein]-deoxyhypusine + propane-1,3-diamine. The protein operates within protein modification; eIF5A hypusination. Catalyzes the NAD-dependent oxidative cleavage of spermidine and the subsequent transfer of the butylamine moiety of spermidine to the epsilon-amino group of a specific lysine residue of the eIF-5A precursor protein to form the intermediate deoxyhypusine residue. The polypeptide is Probable deoxyhypusine synthase (Ignicoccus hospitalis (strain KIN4/I / DSM 18386 / JCM 14125)).